The following is a 120-amino-acid chain: MIVGHGIDIEELASIESAVTRHEGFAKRVLTAQEMERFTSLKGRRQIEYLAGRWSAKEAFSKAMGTGISKLGFQDLEVLNNERGAPYFSQAPFSGKIWLSISHTDQFVTASVILEENHES.

Mg(2+)-binding residues include Asp8 and Glu58.

This sequence belongs to the P-Pant transferase superfamily. AcpS family. Requires Mg(2+) as cofactor.

The protein localises to the cytoplasm. The enzyme catalyses apo-[ACP] + CoA = holo-[ACP] + adenosine 3',5'-bisphosphate + H(+). In terms of biological role, transfers the 4'-phosphopantetheine moiety from coenzyme A to a Ser of acyl-carrier-protein. The sequence is that of Holo-[acyl-carrier-protein] synthase from Streptococcus pneumoniae (strain Hungary19A-6).